The chain runs to 214 residues: Large ribosomal subunit protein uL2my, C-terminal part (214 aa).

Residues 1–30 (MSGLVALCRARASASSSLFNSVIRPAFRNF) constitute a mitochondrion transit peptide. The interval 157–214 (VAMNPCDHPHGGGEGKSKSSGSRGRTSVSPWGKPCKGGYKSASVKKKKKRLAEAAAKM) is disordered. Basic and acidic residues predominate over residues 163–173 (DHPHGGGEGKS). Low complexity predominate over residues 174–185 (KSSGSRGRTSVS).

It belongs to the universal ribosomal protein uL2 family. As to quaternary structure, component of the mitochondrial ribosome large subunit.

It localises to the mitochondrion. The sequence is that of Large ribosomal subunit protein uL2my, C-terminal part from Arabidopsis thaliana (Mouse-ear cress).